Reading from the N-terminus, the 128-residue chain is Small ribosomal subunit protein uS9 (128 aa).

This sequence belongs to the universal ribosomal protein uS9 family.

In Christiangramia forsetii (strain DSM 17595 / CGMCC 1.15422 / KT0803) (Gramella forsetii), this protein is Small ribosomal subunit protein uS9.